Reading from the N-terminus, the 104-residue chain is MEREMAHDERLHVHCGMGLGRTTIFIVMHDILRNAAMLSFDDIIERQRKFNPGRSLDNNKDVSDKGRSEFRNERSEFLPLFYEYAKQNPKGQPLLWSEWLDHNA.

The interval 51–70 (NPGRSLDNNKDVSDKGRSEF) is disordered. Residues 57-70 (DNNKDVSDKGRSEF) show a composition bias toward basic and acidic residues.

The protein belongs to the protein-tyrosine phosphatase family.

This is an uncharacterized protein from Xanthomonas campestris pv. campestris (strain ATCC 33913 / DSM 3586 / NCPPB 528 / LMG 568 / P 25).